The primary structure comprises 157 residues: MSRKSKKIKKKVFKDSKYDSQVIAKFVNRMMYDGKKFISESIVYNSIDMLAEKLEEVDKVAAFNKALDNVKPLVEVRSRRVGGATYQVPVEVREERREALAMKWIISAARKASGKSMQEKLANELVNSYNSTGAAFKKREDTHRMAEANRAFTHYRW.

This sequence belongs to the universal ribosomal protein uS7 family. As to quaternary structure, part of the 30S ribosomal subunit. Contacts proteins S9 and S11.

One of the primary rRNA binding proteins, it binds directly to 16S rRNA where it nucleates assembly of the head domain of the 30S subunit. Is located at the subunit interface close to the decoding center, probably blocks exit of the E-site tRNA. The chain is Small ribosomal subunit protein uS7 from Borrelia duttonii (strain Ly).